We begin with the raw amino-acid sequence, 269 residues long: Thymidylate synthase (269 aa).

DUMP-binding positions include Arg21 and Arg125–Arg126. Cys145 functions as the Nucleophile in the catalytic mechanism. Residues Arg171–Asp174, Asn182, and His212–Tyr214 contribute to the dUMP site. Asp174 lines the (6R)-5,10-methylene-5,6,7,8-tetrahydrofolate pocket. Ala268 is a binding site for (6R)-5,10-methylene-5,6,7,8-tetrahydrofolate.

This sequence belongs to the thymidylate synthase family. Bacterial-type ThyA subfamily. In terms of assembly, homodimer.

The protein resides in the cytoplasm. It carries out the reaction dUMP + (6R)-5,10-methylene-5,6,7,8-tetrahydrofolate = 7,8-dihydrofolate + dTMP. The protein operates within pyrimidine metabolism; dTTP biosynthesis. Its function is as follows. Catalyzes the reductive methylation of 2'-deoxyuridine-5'-monophosphate (dUMP) to 2'-deoxythymidine-5'-monophosphate (dTMP) while utilizing 5,10-methylenetetrahydrofolate (mTHF) as the methyl donor and reductant in the reaction, yielding dihydrofolate (DHF) as a by-product. This enzymatic reaction provides an intracellular de novo source of dTMP, an essential precursor for DNA biosynthesis. In Cutibacterium acnes (strain DSM 16379 / KPA171202) (Propionibacterium acnes), this protein is Thymidylate synthase.